Here is a 124-residue protein sequence, read N- to C-terminus: Small ribosomal subunit protein uS12 (124 aa).

D89 is subject to 3-methylthioaspartic acid. The tract at residues A104 to E124 is disordered. Residues G113–E124 are compositionally biased toward basic residues.

It belongs to the universal ribosomal protein uS12 family. As to quaternary structure, part of the 30S ribosomal subunit. Contacts proteins S8 and S17. May interact with IF1 in the 30S initiation complex.

Its function is as follows. With S4 and S5 plays an important role in translational accuracy. In terms of biological role, interacts with and stabilizes bases of the 16S rRNA that are involved in tRNA selection in the A site and with the mRNA backbone. Located at the interface of the 30S and 50S subunits, it traverses the body of the 30S subunit contacting proteins on the other side and probably holding the rRNA structure together. The combined cluster of proteins S8, S12 and S17 appears to hold together the shoulder and platform of the 30S subunit. The polypeptide is Small ribosomal subunit protein uS12 (Picosynechococcus sp. (strain ATCC 27264 / PCC 7002 / PR-6) (Agmenellum quadruplicatum)).